The chain runs to 505 residues: Flagellin (505 aa).

It belongs to the bacterial flagellin family.

It localises to the secreted. Its subcellular location is the bacterial flagellum. In terms of biological role, flagellin is the subunit protein which polymerizes to form the filaments of bacterial flagella. This Salmonella derby protein is Flagellin (fliC).